Consider the following 287-residue polypeptide: 4-hydroxybenzoate octaprenyltransferase (287 aa).

Helical transmembrane passes span 23 to 40, 99 to 119, 141 to 161, 163 to 183, 213 to 233, 235 to 255, and 266 to 286; these read IGSLLLLWPTLWALWLAG, LFVVLVLLAFGLVLTLNTMTI, LPQFVLGAAFGWSIPMAYAAV, ESLPATCWMMFLAYICWTVAY, LIIGLLQFSMLALLLILGTMT, LGMPYYISLLVAGGMFIYQQI, and FKAFHNNKYAGMAIFIGVLFG.

This sequence belongs to the UbiA prenyltransferase family. Requires Mg(2+) as cofactor.

It is found in the cell inner membrane. The catalysed reaction is all-trans-octaprenyl diphosphate + 4-hydroxybenzoate = 4-hydroxy-3-(all-trans-octaprenyl)benzoate + diphosphate. The protein operates within cofactor biosynthesis; ubiquinone biosynthesis. Its function is as follows. Catalyzes the prenylation of para-hydroxybenzoate (PHB) with an all-trans polyprenyl group. Mediates the second step in the final reaction sequence of ubiquinone-8 (UQ-8) biosynthesis, which is the condensation of the polyisoprenoid side chain with PHB, generating the first membrane-bound Q intermediate 3-octaprenyl-4-hydroxybenzoate. This is 4-hydroxybenzoate octaprenyltransferase from Pectobacterium carotovorum subsp. carotovorum (strain PC1).